The following is a 391-amino-acid chain: Nucleosome assembly protein 1-like 1 (391 aa).

An N-acetylmethionine modification is found at methionine 1. A compositionally biased stretch (basic and acidic residues) spans 1 to 10; the sequence is MADIDNKEQS. Positions 1-32 are disordered; it reads MADIDNKEQSELDQDLDDVEEVEEEETGEETK. Alanine 2 bears the N-acetylalanine mark. Position 10 is a phosphoserine (serine 10). Over residues 11–28 the composition is skewed to acidic residues; it reads ELDQDLDDVEEVEEEETG. A phosphothreonine mark is found at threonine 62 and threonine 64. At serine 69 the chain carries Phosphoserine. Lysine 116 bears the N6-acetyllysine mark. The short motif at 125–150 is the NAP1L motif element; it reads YEPTEEECEWKPDEEDEISEELKEKA. A compositionally biased stretch (acidic residues) spans 132 to 143; that stretch reads CEWKPDEEDEIS. The disordered stretch occupies residues 132–163; it reads CEWKPDEEDEISEELKEKAKIEDEKKDEEKED. Serine 143 bears the Phosphoserine mark. Positions 144–163 are enriched in basic and acidic residues; that stretch reads EELKEKAKIEDEKKDEEKED. Residues 273–279 carry the Nuclear localization signal motif; sequence IKKKQKH. Residues 346–376 are compositionally biased toward acidic residues; it reads AIEDDDDDYDEEGEEADEEGEEEGDEENDPD. The disordered stretch occupies residues 346 to 391; that stretch reads AIEDDDDDYDEEGEEADEEGEEEGDEENDPDYDPKKDQNPAECKQQ. Residues 377–391 show a composition bias toward basic and acidic residues; the sequence is YDPKKDQNPAECKQQ. Position 388 is a cysteine methyl ester (cysteine 388). The S-farnesyl cysteine moiety is linked to residue cysteine 388. Residues 389 to 391 constitute a propeptide, removed in mature form; the sequence is KQQ.

Belongs to the nucleosome assembly protein (NAP) family. Homodimer. The dimer binds strongly and sequentially to single and double H2A-H2B heterodimers. Interacts with ERCC6; this interaction increases ERCC6 processivity. Interacts with RAD54. Interacts with SETD1A. As to quaternary structure, (Microbial infection) Interacts with human herpesvirus 8 protein LANA1 (via N-terminus); this interaction is required for LANA1-dependent DNA replication. In terms of assembly, (Microbial infection) Interacts with hepatitis virus protein NS5A (via C-terminus); this interaction sequesters NAP1L1 in the cytoplasm, blocking its nuclear translocation. (Microbial infection) Interacts with Chikungunya virus non-structural protein 3 (via C-terminus). In terms of processing, monoglycylated on glutamate residues. Cannot be polyglycylated due to the absence of functional TTLL10 in human. Post-translationally, polyglutamylated by TTLL4 on glutamate residues, resulting in polyglutamate chains on the gamma-carboxyl group. Both polyglutamylation and monoglycylation modifications can coexist on the same protein on adjacent residues, and lowering polyglycylation levels increases polyglutamylation, and reciprocally. In terms of tissue distribution, ubiquitously expressed.

The protein resides in the nucleus. The protein localises to the melanosome. It localises to the cytoplasm. In terms of biological role, histone chaperone that plays a role in the nuclear import of H2A-H2B and nucleosome assembly. Also participates in several important DNA repair mechanisms: greatly enhances ERCC6-mediated chromatin remodeling which is essential for transcription-coupled nucleotide excision DNA repair. Also stimulates homologous recombination (HR) by RAD51 and RAD54 which is essential in mitotic DNA double strand break (DSB) repair. Plays a key role in the regulation of embryonic neurogenesis. Promotes the proliferation of neural progenitors and inhibits neuronal differentiation during cortical development. Regulates neurogenesis via the modulation of RASSF10; regulates RASSF10 expression by promoting SETD1A-mediated H3K4 methylation at the RASSF10 promoter. (Microbial infection) Positively regulates Epstein-Barr virus reactivation in epithelial cells through the induction of viral BZLF1 expression. Functionally, (Microbial infection) Together with human herpesvirus 8 protein LANA1, assists the proper assembly of the nucleosome on the replicated viral DNA. The protein is Nucleosome assembly protein 1-like 1 (NAP1L1) of Homo sapiens (Human).